A 152-amino-acid polypeptide reads, in one-letter code: Glycine cleavage system H protein, mitochondrial (152 aa).

Residues 1–31 constitute a mitochondrion transit peptide; that stretch reads MALRMWASSTANALRLSSATRPHYSPLSRCF. The 83-residue stretch at 53–135 folds into the Lipoyl-binding domain; sequence VATVGITDHA…YEDGWMIKVK (83 aa). K94 is subject to N6-lipoyllysine.

Belongs to the GcvH family. In terms of assembly, the glycine cleavage system is composed of four proteins: P, T, L and H. Requires (R)-lipoate as cofactor.

Its subcellular location is the mitochondrion. Its function is as follows. The glycine cleavage system catalyzes the degradation of glycine. The H protein shuttles the methylamine group of glycine from the P protein to the T protein. The protein is Glycine cleavage system H protein, mitochondrial (GDCSH) of Flaveria pubescens (Yellowtops).